The chain runs to 492 residues: NADH-quinone oxidoreductase subunit N (492 aa).

14 helical membrane-spanning segments follow: residues 18–38 (ILPM…NAFT), 45–65 (LNMF…LGLE), 80–100 (LSLV…FLAL), 108–128 (FQTA…QFMV), 133–153 (LLLM…LMAL), 167–187 (FTMG…FYLL), 209–229 (MLFA…VSLV), 250–270 (ISIV…GAFI), 277–297 (VEDI…LIAL), 305–325 (MLAY…FIHT), 333–353 (FVYW…LWLL), 381–401 (VAIL…FSVF), 415–435 (NHIL…FYYF), and 464–484 (MPIY…VFMM).

The protein belongs to the complex I subunit 2 family. As to quaternary structure, NDH-1 is composed of 14 different subunits. Subunits NuoA, H, J, K, L, M, N constitute the membrane sector of the complex.

It is found in the cell inner membrane. The catalysed reaction is a quinone + NADH + 5 H(+)(in) = a quinol + NAD(+) + 4 H(+)(out). NDH-1 shuttles electrons from NADH, via FMN and iron-sulfur (Fe-S) centers, to quinones in the respiratory chain. The immediate electron acceptor for the enzyme in this species is believed to be ubiquinone. Couples the redox reaction to proton translocation (for every two electrons transferred, four hydrogen ions are translocated across the cytoplasmic membrane), and thus conserves the redox energy in a proton gradient. The polypeptide is NADH-quinone oxidoreductase subunit N (Helicobacter acinonychis (strain Sheeba)).